The chain runs to 86 residues: Phosphocarrier protein HPr (86 aa).

Positions 1–86 (MVKKEAIIKA…LAELIESFKE (86 aa)) constitute an HPr domain. Histidine 15 serves as the catalytic Pros-phosphohistidine intermediate.

This sequence belongs to the HPr family.

It is found in the cytoplasm. Its function is as follows. General (non sugar-specific) component of the phosphoenolpyruvate-dependent sugar phosphotransferase system (sugar PTS). This major carbohydrate active-transport system catalyzes the phosphorylation of incoming sugar substrates concomitantly with their translocation across the cell membrane. The phosphoryl group from phosphoenolpyruvate (PEP) is transferred to the phosphoryl carrier protein HPr by enzyme I. Phospho-HPr then transfers it to the PTS EIIA domain. In Borreliella burgdorferi (strain ATCC 35210 / DSM 4680 / CIP 102532 / B31) (Borrelia burgdorferi), this protein is Phosphocarrier protein HPr (ptsH).